Here is a 5255-residue protein sequence, read N- to C-terminus: SCO-spondin (5255 aa).

The first 18 residues, 1-18, serve as a signal peptide directing secretion; sequence MGIVATVLLWVVTEAARG. An EMI domain is found at 19–111; the sequence is RWCERTEQVT…ACCAGWSGPH (93 aa). N-linked (GlcNAc...) asparagine glycans are attached at residues N97, N136, N156, and N255. Residues 192 to 358 form the VWFD 1 domain; that stretch reads ASCTVWAGSR…PDANPELSCS (167 aa). Cystine bridges form between C194–C317 and C216–C357. The TIL 1 domain maps to 453-508; sequence CGHGQRYSDCVSSCPASCMAAGTAEEGHCRDDCASGCECTPGLLLDRGACIPQSAC. In terms of domain architecture, VWFC 1 spans 508 to 601; the sequence is CPCLHRGHIY…CGGHQPLSCL (94 aa). A VWFD 2 domain is found at 546-717; the sequence is AECAVLGDLH…NKYRVSTDCP (172 aa). Cystine bridges form between C548/C681, C570/C716, and C592/C600. Residue N801 is glycosylated (N-linked (GlcNAc...) asparagine). In terms of domain architecture, TIL 2 spans 809 to 868; that stretch reads CRGGQVYQECSSPCGRTCADLRLDGASSCPSLDNICVSGCNCPEGPVLDDGGQCVPPGVC. Positions 868 to 926 constitute a VWFC 2 domain; that stretch reads CPCQHSSQLYPAGSKIRQGCNACMCTAGTWSCTDAPCPDAAFCPGDLVYVFGSCLRTCD. N-linked (GlcNAc...) asparagine glycosylation is found at N931 and N972. Positions 998–1168 constitute a VWFD 3 domain; that stretch reads GTCVATGDPH…NSWRVSLLCP (171 aa). Cystine bridges form between C1000–C1132, C1022–C1167, and C1043–C1050. One can recognise a TIL 3 domain in the interval 1263 to 1319; sequence CDGGQEYSACGPPCPQTCRNLGLELPEHCDTMSCLEGCFCPEGKVLHEGSCIDPAEC. N1340 carries N-linked (GlcNAc...) asparagine glycosylation. LDL-receptor class A domains are found at residues 1362-1398, 1400-1436, 1439-1477, 1479-1515, 1515-1551, and 1555-1593; these read HCPD…EVCA, HCAP…RGCP, PCAP…AGCS, SCSV…RGCV, VCPA…AFCP, and TCAP…VRCM. 18 disulfides stabilise this stretch: C1363-C1376, C1370-C1389, C1383-C1397, C1401-C1413, C1408-C1426, C1420-C1435, C1440-C1452, C1447-C1465, C1459-C1476, C1480-C1492, C1487-C1505, C1499-C1514, C1516-C1528, C1523-C1541, C1535-C1550, C1556-C1568, C1563-C1581, and C1575-C1592. An N-linked (GlcNAc...) asparagine glycan is attached at N1610. LDL-receptor class A domains are found at residues 1616–1652, 1654–1693, and 1699–1734; these read VCGP…LGCN, SCVL…DNCG, and PCPG…LACE. 3 cysteine pairs are disulfide-bonded: C1617–C1629, C1624–C1642, and C1636–C1651. N-linked (GlcNAc...) asparagine glycosylation occurs at N1652. 6 disulfides stabilise this stretch: C1655-C1668, C1662-C1681, C1675-C1692, C1700-C1711, C1706-C1724, and C1718-C1733. N1713 carries an N-linked (GlcNAc...) asparagine glycan. N1743 carries an N-linked (GlcNAc...) asparagine glycan. The LDL-receptor class A 10 domain occupies 1748–1790; that stretch reads PCAEYSCRDGDCITFKQVCNGLPDCRDGDMASGWLPSDEWDCG. 6 disulfides stabilise this stretch: C1749–C1759, C1754–C1772, C1766–C1789, C1801–C1837, C1805–C1842, and C1816–C1827. TSP type-1 domains lie at 1789 to 1843 and 1845 to 1903; these read CGQW…TACP and DGAW…DGCP. Residue N1856 is glycosylated (N-linked (GlcNAc...) asparagine). 3 disulfides stabilise this stretch: C1857-C1897, C1861-C1902, and C1871-C1881. The TIL 4 domain occupies 1907-1961; the sequence is CPGGLQPRPCAPCPASCADLASRAPCRREQCTPGCWCAEGLVLDGERGCVRPREC. EGF-like domains are found at residues 1919–1956 and 1957–1983; these read CPAS…RGCV and RPRE…CRLC. Positions 1961 to 2019 constitute a VWFC 3 domain; that stretch reads CRCEVDGLRYWPGQRMKLNCRLCTCLDGQPRRCRHNPACSVSCSWSAWSPWGECLGPCG. Positions 2002 to 2058 constitute a TSP type-1 3 domain; the sequence is SCSWSAWSPWGECLGPCGVQSIQWSFRSPSHPGKHGTNRQCRGIYRKARRCQTEPCQ. Disulfide bonds link C2003–C2042, C2014–C2018, and C2052–C2057. Residues 2058-2120 enclose the VWFC 4 domain; it reads QECEHQGRSR…GKGDSCCFCA (63 aa). N-linked (GlcNAc...) asparagine glycosylation is found at N2125 and N2230. 4 disulfide bridges follow: C2162–C2310, C2328–C2339, C2335–C2352, and C2346–C2361. The 149-residue stretch at 2162 to 2310 folds into the F5/8 type C domain; sequence CYSPLGIASL…IFLRAELLGC (149 aa). The LDL-receptor class A 11 domain occupies 2327–2362; the sequence is PCGTGEFWCGVSCVTASRRCDGATDCPGGADEAGCE. Residues 2352-2373 are disordered; it reads CPGGADEAGCEPPSSTTLPTHP. Polar residues predominate over residues 2364–2373; sequence PSSTTLPTHP. 2 consecutive LDL-receptor class A domains span residues 2481 to 2517 and 2538 to 2574; these read LCPP…AHCG and TCSP…SSCA. 12 cysteine pairs are disulfide-bonded: C2482-C2494, C2489-C2507, C2501-C2516, C2539-C2551, C2546-C2564, C2558-C2573, C2576-C2612, C2587-C2591, C2622-C2627, C2642-C2679, C2646-C2684, and C2657-C2669. TSP type-1 domains are found at residues 2575–2628 and 2630–2685; these read DCIL…RACP and PGAW…QPCG. One can recognise a TIL 5 domain in the interval 2708-2750; it reads PPCPQVCGDLSATSSCQSPCQEGCRCPPGLFLQEGTCVNASQC. N2746 is a glycosylation site (N-linked (GlcNAc...) asparagine). 3 TSP type-1 domains span residues 2790–2844, 2849–2903, and 2905–2958; these read ACAW…TPCA, SSGW…APCP, and AGVW…RPCG. Cystine bridges form between C2791–C2829, C2802–C2806, C2839–C2843, C2861–C2897, C2865–C2902, C2881–C2887, C2917–C2952, C2921–C2957, and C2932–C2942. The 50-residue stretch at 2971–3020 folds into the TIL 6 domain; the sequence is EECRHSEGRCPWICQDLGAGVACTAQCQPGCHCPAGLLLQNGTCVPPSHC. N-linked (GlcNAc...) asparagine glycosylation is found at N3011, N3042, and N3065. Residues 3020-3077 enclose the VWFC 5 domain; that stretch reads CLCHHRGHLYQPGDINALDTCNNCTCVTGQMVCSTETCPVPCTWSNWTAWSTCSHSCD. TSP type-1 domains lie at 3060-3115 and 3117-3158; these read PCTW…QPCR and VAPW…APCP. Disulfide bonds link C3061–C3099, C3072–C3076, and C3109–C3114. An N-linked (GlcNAc...) asparagine glycan is attached at N3136. One can recognise a TIL 7 domain in the interval 3165–3217; that stretch reads CPPGKQWQACAQGAASCAELSAAPPADGSCHPGCYCPPGALLLNNECVAEAAC. Positions 3217–3275 constitute a VWFC 6 domain; sequence CPCAVDGVLYQPGDVVPQGCHNCSCIAGRVTNCSQEDCGDVDGPWTPWTPWSECSASCG. Residues N3238 and N3248 are each glycosylated (N-linked (GlcNAc...) asparagine). A TSP type-1 11 domain is found at 3258-3309; sequence DGPWTPWTPWSECSASCGPGRQRRYRFCSAHPGVPCAEPQPQERPCARQPCH. Cystine bridges form between C3270/C3303, C3274/C3308, and C3285/C3293. N-linked (GlcNAc...) asparagine glycans are attached at residues N3350, N3366, and N3392. 2 TSP type-1 domains span residues 3410–3475 and 3477–3532; these read PGAW…PPCP and DGAW…SSCP. Cystine bridges form between C3422–C3468, C3426–C3474, C3437–C3449, C3489–C3524, C3492–C3531, and C3502–C3514. Positions 3534–3589 constitute a TIL 8 domain; sequence CAGGLVAFTCGKPCPHSCEDLREDTACMATPRCLPACACPHGQLLQDGDCVPPELC. N-linked (GlcNAc...) asparagine glycans are attached at residues N3598 and N3625. TSP type-1 domains follow at residues 3644 to 3700 and 3702 to 3751; these read DGGW…EGCP and EEPW…HVCR. 6 disulfides stabilise this stretch: C3656/C3693, C3660/C3699, C3671/C3683, C3714/C3745, C3718/C3750, and C3729/C3735. 2 N-linked (GlcNAc...) asparagine glycosylation sites follow: N3823 and N3869. 4 TSP type-1 domains span residues 3878 to 3934, 3951 to 4004, 4018 to 4074, and 4076 to 4131; these read DGGF…PECP, EEGF…PLCS, NCSW…QACK, and DGAW…QPCD. Cystine bridges form between C3890/C3928, C3894/C3933, C3906/C3918, C3963/C3998, C3967/C4003, and C3982/C3988. The segment at 3932–3951 is disordered; that stretch reads ECPAVPTTEPGPGVAGAEEE. N-linked (GlcNAc...) asparagine glycosylation is present at N4018. 6 disulfides stabilise this stretch: C4019–C4055, C4030–C4034, C4068–C4073, C4088–C4125, C4092–C4130, and C4103–C4115. Positions 4134-4189 constitute a TIL 9 domain; the sequence is CPPGMALVTCANHCPRHCGDLQEGIVCREEEHCEPGCRCPNGTLEQDGGCVPLAHC. N-linked (GlcNAc...) asparagine glycosylation is found at N4174 and N4211. 3 consecutive TSP type-1 domains span residues 4230 to 4282, 4322 to 4384, and 4386 to 4433; these read RCPW…GPCP, GAEH…RPCP, and ECSW…SGCS. Cystine bridges form between C4231–C4266, C4242–C4246, and C4276–C4281. An N-linked (GlcNAc...) asparagine glycan is attached at N4362. 3 cysteine pairs are disulfide-bonded: C4387–C4417, C4398–C4400, and C4427–C4432. Residue N4428 is glycosylated (N-linked (GlcNAc...) asparagine). The region spanning 4437–4492 is the TIL 10 domain; the sequence is CEPPFEFQPCSPPCARLCSTLQHPELCPAQSHCLPGCFCPQGLLEQRSACVPPEQC. N4498 is a glycosylation site (N-linked (GlcNAc...) asparagine). 2 consecutive TSP type-1 domains span residues 4537-4608 and 4610-4662; these read LPLS…DICQ and LCLW…AVCP. Intrachain disulfides connect C4548/C4601, C4551/C4607, C4575/C4591, C4611/C4646, C4622/C4626, and C4656/C4661. Residues 4675–4722 enclose the TIL 11 domain; it reads TTCANSCPRACADLWQHVECVQGGCKPGCRCPQGQLLQDGLCVPTAQC. Residues N4730, N4747, and N4752 are each glycosylated (N-linked (GlcNAc...) asparagine). TSP type-1 domains follow at residues 4762–4815 and 4817–4869; these read CPSY…QPCP and GCQL…HNCT. 6 cysteine pairs are disulfide-bonded: C4774–C4809, C4778–C4814, C4789–C4798, C4818–C4852, C4829–C4833, and C4863–C4868. The N-linked (GlcNAc...) asparagine glycan is linked to N4867. The TIL 12 domain occupies 4872 to 4926; that stretch reads CPRSQVHRECANACPHACADLRPQTQCLPQPCQPGCACPPGQVLQDGACVPPEEC. N-linked (GlcNAc...) asparagine glycosylation is found at N4939 and N4970. Positions 4979-5033 constitute a TSP type-1 27 domain; it reads DCLWSPWSPWSPCSVTCGMGERLSHRHPLRQRLYEGAECLGPPVRRAACHLPDCA. 3 disulfide bridges follow: C4980/C5017, C4991/C4995, and C5027/C5032. N-linked (GlcNAc...) asparagine glycans are attached at residues N5081, N5122, and N5169. A VWFC 7 domain is found at 5092 to 5150; that stretch reads CECLHQGQLHQPGSEWQEQCARCRCVDGKANCTDGCTPLSCPEGEVKVREPGRCCPVCR. Cystine bridges form between C5161-C5209, C5175-C5226, C5185-C5242, and C5189-C5244. Residues 5161 to 5248 enclose the CTCK domain; that stretch reads CRRFTELRNI…IHSCECSSCQ (88 aa).

Belongs to the thrombospondin family.

Its subcellular location is the secreted. It localises to the extracellular space. Involved in the modulation of neuronal aggregation. May be involved in developmental events during the formation of the central nervous system. The chain is SCO-spondin (SSPO) from Gallus gallus (Chicken).